The sequence spans 65 residues: Large ribosomal subunit protein bL35 (65 aa).

Residues 1–22 form a disordered region; that stretch reads MPKMKTKSSAKKRFKVTGSGKI.

It belongs to the bacterial ribosomal protein bL35 family.

The chain is Large ribosomal subunit protein bL35 from Flavobacterium johnsoniae (strain ATCC 17061 / DSM 2064 / JCM 8514 / BCRC 14874 / CCUG 350202 / NBRC 14942 / NCIMB 11054 / UW101) (Cytophaga johnsonae).